The chain runs to 271 residues: Imidazole glycerol phosphate synthase subunit HisF (271 aa).

Catalysis depends on residues Asp-12 and Asp-136.

This sequence belongs to the HisA/HisF family. As to quaternary structure, heterodimer of HisH and HisF.

It is found in the cytoplasm. The catalysed reaction is 5-[(5-phospho-1-deoxy-D-ribulos-1-ylimino)methylamino]-1-(5-phospho-beta-D-ribosyl)imidazole-4-carboxamide + L-glutamine = D-erythro-1-(imidazol-4-yl)glycerol 3-phosphate + 5-amino-1-(5-phospho-beta-D-ribosyl)imidazole-4-carboxamide + L-glutamate + H(+). Its pathway is amino-acid biosynthesis; L-histidine biosynthesis; L-histidine from 5-phospho-alpha-D-ribose 1-diphosphate: step 5/9. Functionally, IGPS catalyzes the conversion of PRFAR and glutamine to IGP, AICAR and glutamate. The HisF subunit catalyzes the cyclization activity that produces IGP and AICAR from PRFAR using the ammonia provided by the HisH subunit. The polypeptide is Imidazole glycerol phosphate synthase subunit HisF (Natronomonas pharaonis (strain ATCC 35678 / DSM 2160 / CIP 103997 / JCM 8858 / NBRC 14720 / NCIMB 2260 / Gabara) (Halobacterium pharaonis)).